Reading from the N-terminus, the 310-residue chain is Hairy/enhancer-of-split related with YRPW motif-like protein (310 aa).

The tract at residues 1-21 (MKRPHDYSSPDSDTDELIDVG) is disordered. A compositionally biased stretch (acidic residues) spans 12–21 (SDTDELIDVG). The bHLH domain maps to 43–98 (ARKKRRGIIEKRRRDRINHSLSELRRLVPSAFEKQGSSKLEKAEILQMTVDHLKLL). The Orange domain maps to 116-152 (YRTLGFRECVGEVVRYLSSLEGVESSDPIGARLVSHL). Low complexity-rich tracts occupy residues 182-192 (LQAASPPASST) and 261-273 (PSSSSSSSNSSPP). 2 disordered regions span residues 182 to 208 (LQAASPPASSTPFPPNARRDLAPHGTA) and 248 to 310 (HRLQ…IGAF). The segment covering 293-302 (LSSSSKSAQA) has biased composition (polar residues).

It belongs to the HEY family.

The protein resides in the nucleus. Functionally, transcriptional repressor which functions as a downstream effector of Notch signaling. The protein is Hairy/enhancer-of-split related with YRPW motif-like protein (heyl) of Danio rerio (Zebrafish).